We begin with the raw amino-acid sequence, 83 residues long: Small ribosomal subunit protein uS17 (83 aa).

It belongs to the universal ribosomal protein uS17 family. In terms of assembly, part of the 30S ribosomal subunit.

Functionally, one of the primary rRNA binding proteins, it binds specifically to the 5'-end of 16S ribosomal RNA. The chain is Small ribosomal subunit protein uS17 from Thermodesulfovibrio yellowstonii (strain ATCC 51303 / DSM 11347 / YP87).